Here is a 198-residue protein sequence, read N- to C-terminus: Small ribosomal subunit protein uS4 (198 aa).

The S4 RNA-binding domain maps to 91–154 (SRLDNVVYRL…KNLNIVQEAV (64 aa)).

Belongs to the universal ribosomal protein uS4 family. In terms of assembly, part of the 30S ribosomal subunit. Contacts protein S5. The interaction surface between S4 and S5 is involved in control of translational fidelity.

Functionally, one of the primary rRNA binding proteins, it binds directly to 16S rRNA where it nucleates assembly of the body of the 30S subunit. Its function is as follows. With S5 and S12 plays an important role in translational accuracy. In Onion yellows phytoplasma (strain OY-M), this protein is Small ribosomal subunit protein uS4.